Here is a 203-residue protein sequence, read N- to C-terminus: Peptide deformylase (203 aa).

Positions 130 and 173 each coordinate Fe cation. Glu174 is an active-site residue. Residue His177 coordinates Fe cation.

It belongs to the polypeptide deformylase family. Requires Fe(2+) as cofactor.

The enzyme catalyses N-terminal N-formyl-L-methionyl-[peptide] + H2O = N-terminal L-methionyl-[peptide] + formate. In terms of biological role, removes the formyl group from the N-terminal Met of newly synthesized proteins. Requires at least a dipeptide for an efficient rate of reaction. N-terminal L-methionine is a prerequisite for activity but the enzyme has broad specificity at other positions. In Streptococcus pneumoniae serotype 4 (strain ATCC BAA-334 / TIGR4), this protein is Peptide deformylase.